The sequence spans 605 residues: Phosphoenolpyruvate carboxykinase (ATP) (605 aa).

Low complexity predominate over residues 27 to 48 (SGPSSSFINNNNSNNNNNKSSN). Residues 27 to 67 (SGPSSSFINNNNSNNNNNKSSNMFNHDHVNKTNLHPGGVKP) are disordered. ATP is bound at residue 307–314 (GLSGTGKT).

This sequence belongs to the phosphoenolpyruvate carboxykinase (ATP) family.

It catalyses the reaction oxaloacetate + ATP = phosphoenolpyruvate + ADP + CO2. The protein operates within carbohydrate biosynthesis; gluconeogenesis. This chain is Phosphoenolpyruvate carboxykinase (ATP) (acu-6), found in Neurospora crassa (strain ATCC 24698 / 74-OR23-1A / CBS 708.71 / DSM 1257 / FGSC 987).